The sequence spans 723 residues: Nuclear intron maturase 3, mitochondrial (723 aa).

Residues 1-26 constitute a mitochondrion transit peptide; sequence MVLRLRVHSFYNRGISFLVSSSLRNL. Residues 532–597 are intron maturase type-2; degenerate; it reads VSAPEELVRK…HYTKDLRVSD (66 aa). The segment at 646–700 adopts a THAP-type zinc-finger fold; it reads CAASFCERSDTIMHRVHLLQNRLHINPLDEEKWVPGMGTIHSALNRKCLPLCSTH.

The protein belongs to the plant nuclear intron maturase (nMat) family.

The protein resides in the mitochondrion. Its function is as follows. Nuclear-encoded maturase required for splicing of group-II introns in mitochondria. Necessary for mitochondrial biogenesis during early developmental stages. This chain is Nuclear intron maturase 3, mitochondrial, found in Arabidopsis thaliana (Mouse-ear cress).